The chain runs to 713 residues: Low-density lipoprotein receptor-related protein 10 (713 aa).

Positions 1-17 are cleaved as a signal peptide; sequence MLSALPLLFLLLGGALA. The Extracellular segment spans residues 18 to 441; that stretch reads RPDRITFPRS…WDCSYALPRK (424 aa). 2 disulfide bridges follow: Cys29-Cys58 and Cys81-Cys99. A CUB 1 domain is found at 29–137; it reads CEAPPAVLSE…QGFLLTYSQD (109 aa). N-linked (GlcNAc...) asparagine glycosylation occurs at Asn57. Residue Asn112 is glycosylated (N-linked (GlcNAc...) asparagine). Positions 140–176 constitute an LDL-receptor class A 1 domain; that stretch reads LCLQEEFQCLNHRCIPAAQRCDGIDACGDGSDEAGCS. 4 disulfides stabilise this stretch: Cys141–Cys153, Cys148–Cys166, Cys160–Cys175, and Cys193–Cys221. Residues 193 to 306 enclose the CUB 2 domain; that stretch reads CNLTLEDFYG…RGFNATYHVR (114 aa). N-linked (GlcNAc...) asparagine glycans are attached at residues Asn194 and Asn300. LDL-receptor class A domains follow at residues 308–355, 356–398, and 399–435; these read YCLP…EGCP, GCPP…RRCR, and HCQPGNFRCRDEKCVYETWVCDGQPDCTDGSDEWDCS. Cystine bridges form between Cys309-Cys332, Cys316-Cys345, Cys339-Cys354, Cys357-Cys375, Cys364-Cys388, Cys382-Cys397, Cys400-Cys412, Cys407-Cys425, and Cys419-Cys434. Residues 442–462 form a helical membrane-spanning segment; it reads VITAAVIGSLVCGLLLVIALG. At 463-713 the chain is on the cytoplasmic side; it reads CTCKLYAIRT…VEAEDEPLLA (251 aa). The tract at residues 566–636 is disordered; sequence LLPRTNTPAR…TLPALATVSE (71 aa). Thr596 is modified (phosphothreonine). Positions 614–626 are enriched in pro residues; it reads PPLPIKTPIPTPS.

It belongs to the LDLR family. In terms of tissue distribution, highly expressed in heart, lung, liver and liver. Expressed at low level in brain and spleen. Weakly or not expressed in testis and skeletal muscle. In liver, it is expressed in hepatocytes and at higher level in sinusoidal lining. In the kidney, it is expressed in peritubular capillaries. In brain, it is expressed in the epithelium of the choroid plexus ependymal cells of the third ventricle pia matter, and to lesser extent in hippocampal fields CA2 and CA3.

Its subcellular location is the membrane. The protein localises to the coated pit. Probable receptor, which is involved in the internalization of lipophilic molecules and/or signal transduction. May be involved in the uptake of lipoprotein APOE in liver. This chain is Low-density lipoprotein receptor-related protein 10 (Lrp10), found in Mus musculus (Mouse).